The sequence spans 71 residues: uncharacterized protein (71 aa).

Residues 1 to 16 show a composition bias toward basic residues; sequence MAKSQAKKKRGHRLRN. 2 disordered regions span residues 1-39 and 51-71; these read MAKSQAKKKRGHRLRNGGRDVLLSRGSTPSFSTHGRMTK and KNPYDHTAVDDKDFFVPQKAA. The span at 25-35 shows a compositional bias: polar residues; that stretch reads RGSTPSFSTHG. Basic and acidic residues predominate over residues 51–64; that stretch reads KNPYDHTAVDDKDF.

This is an uncharacterized protein from Bacillus subtilis (strain 168).